A 436-amino-acid chain; its full sequence is Phosphomethylpyrimidine synthase (436 aa).

Substrate-binding positions include Asn69, Met98, Tyr127, His163, 185 to 187 (SRG), 226 to 229 (DACR), and Glu265. A Zn(2+)-binding site is contributed by His269. Residue Tyr292 coordinates substrate. His333 serves as a coordination point for Zn(2+). The [4Fe-4S] cluster site is built by Cys409, Cys412, and Cys416.

Belongs to the ThiC family. It depends on [4Fe-4S] cluster as a cofactor.

It catalyses the reaction 5-amino-1-(5-phospho-beta-D-ribosyl)imidazole + S-adenosyl-L-methionine = 4-amino-2-methyl-5-(phosphooxymethyl)pyrimidine + CO + 5'-deoxyadenosine + formate + L-methionine + 3 H(+). Its pathway is cofactor biosynthesis; thiamine diphosphate biosynthesis. Its function is as follows. Catalyzes the synthesis of the hydroxymethylpyrimidine phosphate (HMP-P) moiety of thiamine from aminoimidazole ribotide (AIR) in a radical S-adenosyl-L-methionine (SAM)-dependent reaction. The sequence is that of Phosphomethylpyrimidine synthase from Clostridium acetobutylicum (strain ATCC 824 / DSM 792 / JCM 1419 / IAM 19013 / LMG 5710 / NBRC 13948 / NRRL B-527 / VKM B-1787 / 2291 / W).